The primary structure comprises 281 residues: GPN-loop GTPase 3 (281 aa).

A GTP-binding site is contributed by 13–18; the sequence is GSGKST. Positions 70–72 match the Gly-Pro-Asn (GPN)-loop; involved in dimer interface motif; sequence GPN. 173–176 contributes to the GTP binding site; the sequence is SKMD. The segment at 259–281 is disordered; that stretch reads VQYGEDEEPKEPKDMDEGDFTAQ.

This sequence belongs to the GPN-loop GTPase family. As to quaternary structure, heterodimers with GPN1 or GPN2. Binds to RNA polymerase II (RNAPII).

Small GTPase required for proper nuclear import of RNA polymerase II and III (RNAPII and RNAPIII). May act at an RNAP assembly step prior to nuclear import. The polypeptide is GPN-loop GTPase 3 (Mycosarcoma maydis (Corn smut fungus)).